Consider the following 368-residue polypeptide: 1-deoxy-D-xylulose 5-phosphate reductoisomerase (368 aa).

NADPH-binding residues include threonine 9, glycine 10, serine 11, isoleucine 12, asparagine 35, and asparagine 106. Residue lysine 107 participates in 1-deoxy-D-xylulose 5-phosphate binding. Position 108 (glutamate 108) interacts with NADPH. A Mn(2+)-binding site is contributed by aspartate 132. 1-deoxy-D-xylulose 5-phosphate contacts are provided by serine 133, glutamate 134, serine 158, and histidine 181. Glutamate 134 lines the Mn(2+) pocket. Residue glycine 187 coordinates NADPH. Serine 194, asparagine 199, lysine 200, and glutamate 203 together coordinate 1-deoxy-D-xylulose 5-phosphate. Glutamate 203 provides a ligand contact to Mn(2+).

It belongs to the DXR family. Mg(2+) serves as cofactor. The cofactor is Mn(2+).

The enzyme catalyses 2-C-methyl-D-erythritol 4-phosphate + NADP(+) = 1-deoxy-D-xylulose 5-phosphate + NADPH + H(+). Its pathway is isoprenoid biosynthesis; isopentenyl diphosphate biosynthesis via DXP pathway; isopentenyl diphosphate from 1-deoxy-D-xylulose 5-phosphate: step 1/6. In terms of biological role, catalyzes the NADPH-dependent rearrangement and reduction of 1-deoxy-D-xylulose-5-phosphate (DXP) to 2-C-methyl-D-erythritol 4-phosphate (MEP). In Mycoplasmoides gallisepticum (strain R(low / passage 15 / clone 2)) (Mycoplasma gallisepticum), this protein is 1-deoxy-D-xylulose 5-phosphate reductoisomerase.